Here is a 78-residue protein sequence, read N- to C-terminus: Large ribosomal subunit protein bL28 (78 aa).

Positions 1 to 29 (MSAHCQVTGRKPSFGKSVSHSHRRTSRRW) are disordered.

This sequence belongs to the bacterial ribosomal protein bL28 family.

This chain is Large ribosomal subunit protein bL28, found in Corynebacterium glutamicum (strain ATCC 13032 / DSM 20300 / JCM 1318 / BCRC 11384 / CCUG 27702 / LMG 3730 / NBRC 12168 / NCIMB 10025 / NRRL B-2784 / 534).